The chain runs to 256 residues: Triosephosphate isomerase (256 aa).

9-11 (NWK) is a binding site for substrate. His-97 serves as the catalytic Electrophile. Glu-169 acts as the Proton acceptor in catalysis. Residues Gly-175, Ser-214, and 235 to 236 (GG) each bind substrate.

This sequence belongs to the triosephosphate isomerase family. Homodimer.

The protein resides in the cytoplasm. It catalyses the reaction D-glyceraldehyde 3-phosphate = dihydroxyacetone phosphate. The protein operates within carbohydrate biosynthesis; gluconeogenesis. Its pathway is carbohydrate degradation; glycolysis; D-glyceraldehyde 3-phosphate from glycerone phosphate: step 1/1. Functionally, involved in the gluconeogenesis. Catalyzes stereospecifically the conversion of dihydroxyacetone phosphate (DHAP) to D-glyceraldehyde-3-phosphate (G3P). This chain is Triosephosphate isomerase, found in Vibrio parahaemolyticus serotype O3:K6 (strain RIMD 2210633).